The primary structure comprises 304 residues: MDTAAVDRIIEKLIEVRSSNPGKLVQLSESEIKQLCVASRDIFLKQPNLLESEAPIKTRGDIHGQYSDLLRLFEYGGFPPEANYLFLGDYVDRGRQSLETICLLLAYKIKYPENFFLLRGNHECASINRIYGFYDECKRRFNVKLWKSFTDCFNCLPVAALIDEKILCMHGGLSPDLSSLDQIRNLPRPTAIPDTGLLCDLQRSDPGKDVKGWGMNDRGVSYTFGPDKVSEFLSKHDLDLVCRAHQVVEDGYEFFAESELVTIFSAPNYCGEFDNAGAMMSVDENLLCSFQILKPAEKKNKFVM.

Positions 61, 63, 89, and 121 each coordinate Mn(2+). Residue His122 is the Proton donor of the active site. The Mn(2+) site is built by His170 and His245.

It belongs to the PPP phosphatase family. PP-1 subfamily. Mn(2+) is required as a cofactor.

It catalyses the reaction O-phospho-L-seryl-[protein] + H2O = L-seryl-[protein] + phosphate. The catalysed reaction is O-phospho-L-threonyl-[protein] + H2O = L-threonyl-[protein] + phosphate. The sequence is that of Serine/threonine-protein phosphatase PP1 isozyme 3 (NPP3) from Nicotiana tabacum (Common tobacco).